Here is a 429-residue protein sequence, read N- to C-terminus: Histidine--tRNA ligase (429 aa).

The protein belongs to the class-II aminoacyl-tRNA synthetase family. In terms of assembly, homodimer.

It localises to the cytoplasm. The catalysed reaction is tRNA(His) + L-histidine + ATP = L-histidyl-tRNA(His) + AMP + diphosphate + H(+). In Rippkaea orientalis (strain PCC 8801 / RF-1) (Cyanothece sp. (strain PCC 8801)), this protein is Histidine--tRNA ligase.